Consider the following 447-residue polypeptide: Probable tRNA methyltransferase 9B (447 aa).

Serine 212 carries the phosphoserine modification. Disordered stretches follow at residues 274 to 306 (AWANSTVSQQPSRHPSLDLHAPEPFSTKGPNLD) and 320 to 348 (WLRTPGTSDNFSGHKGGGSRRKEGGNFLD). Positions 276-286 (ANSTVSQQPSR) are enriched in polar residues.

The protein belongs to the methyltransferase superfamily.

Its function is as follows. May modify wobble uridines in specific arginine and glutamic acid tRNAs. Acts as a tumor suppressor by promoting the expression of LIN9. The polypeptide is Probable tRNA methyltransferase 9B (Trmt9b) (Mus musculus (Mouse)).